Consider the following 111-residue polypeptide: Viscotoxin-A3 (111 aa).

Residues 1-26 form the signal peptide; it reads MEVVRGSSLVLLVLLLGALLVSQVES. 3 cysteine pairs are disulfide-bonded: cysteine 29-cysteine 66, cysteine 30-cysteine 58, and cysteine 42-cysteine 52. Residues 73 to 111 constitute a propeptide, acidic domain; the sequence is FYCTLGCESSQCATNSNGDAEAVRCKTACSDLCQDVDDA.

The protein belongs to the plant thionin (TC 1.C.44) family.

It is found in the secreted. In terms of biological role, thionins are small plant proteins which are toxic to animal cells. They seem to exert their toxic effect at the level of the cell membrane. Their precise function is not known. This Viscum album (European mistletoe) protein is Viscotoxin-A3 (THI2.1).